Reading from the N-terminus, the 101-residue chain is Large ribosomal subunit protein uL23 (101 aa).

This sequence belongs to the universal ribosomal protein uL23 family. As to quaternary structure, part of the 50S ribosomal subunit. Contacts protein L29, and trigger factor when it is bound to the ribosome.

One of the early assembly proteins it binds 23S rRNA. One of the proteins that surrounds the polypeptide exit tunnel on the outside of the ribosome. Forms the main docking site for trigger factor binding to the ribosome. The chain is Large ribosomal subunit protein uL23 from Wigglesworthia glossinidia brevipalpis.